The chain runs to 601 residues: A-type ATP synthase subunit A (601 aa).

ATP is bound at residue 235–242; sequence GGFGTGKT.

The protein belongs to the ATPase alpha/beta chains family. In terms of assembly, has multiple subunits with at least A(3), B(3), C, D, E, F, H, I and proteolipid K(x).

The protein localises to the cell membrane. It carries out the reaction ATP + H2O + 4 H(+)(in) = ADP + phosphate + 5 H(+)(out). In terms of biological role, component of the A-type ATP synthase that produces ATP from ADP in the presence of a proton gradient across the membrane. The A chain is the catalytic subunit. In Thermofilum pendens (strain DSM 2475 / Hrk 5), this protein is A-type ATP synthase subunit A.